The chain runs to 143 residues: Peptide methionine sulfoxide reductase MsrB (143 aa).

The MsrB domain maps to Asp-16 to Arg-139. The Zn(2+) site is built by Cys-55, Cys-58, Cys-104, and Cys-107. Cys-128 (nucleophile) is an active-site residue.

Belongs to the MsrB Met sulfoxide reductase family. Requires Zn(2+) as cofactor.

It carries out the reaction L-methionyl-[protein] + [thioredoxin]-disulfide + H2O = L-methionyl-(R)-S-oxide-[protein] + [thioredoxin]-dithiol. In Burkholderia vietnamiensis (strain G4 / LMG 22486) (Burkholderia cepacia (strain R1808)), this protein is Peptide methionine sulfoxide reductase MsrB.